Here is a 105-residue protein sequence, read N- to C-terminus: uncharacterized protein (105 aa).

Residues 22–105 (GSAGHGATEA…KKRIIKGKVM (84 aa)) are disordered. Over residues 61 to 83 (HDSRPARGDARKRHCQENNKTDR) the composition is skewed to basic and acidic residues. Residues 93–105 (NRRKKRIIKGKVM) show a composition bias toward basic residues.

This is an uncharacterized protein from Escherichia coli (strain K12).